Consider the following 437-residue polypeptide: Amino-acid acetyltransferase (437 aa).

The N-acetyltransferase domain maps to 289–429 (ENIRLATSFD…EHYNYQRMSK (141 aa)).

This sequence belongs to the acetyltransferase family. ArgA subfamily.

It is found in the cytoplasm. It carries out the reaction L-glutamate + acetyl-CoA = N-acetyl-L-glutamate + CoA + H(+). Its pathway is amino-acid biosynthesis; L-arginine biosynthesis; N(2)-acetyl-L-ornithine from L-glutamate: step 1/4. The polypeptide is Amino-acid acetyltransferase (Actinobacillus pleuropneumoniae serotype 7 (strain AP76)).